The chain runs to 403 residues: 4-hydroxy-3-methylbut-2-en-1-yl diphosphate synthase (ferredoxin) (403 aa).

C312, C315, C346, and E353 together coordinate [4Fe-4S] cluster.

Belongs to the IspG family. The cofactor is [4Fe-4S] cluster.

The enzyme catalyses (2E)-4-hydroxy-3-methylbut-2-enyl diphosphate + 2 oxidized [2Fe-2S]-[ferredoxin] + H2O = 2-C-methyl-D-erythritol 2,4-cyclic diphosphate + 2 reduced [2Fe-2S]-[ferredoxin] + H(+). It participates in isoprenoid biosynthesis; isopentenyl diphosphate biosynthesis via DXP pathway; isopentenyl diphosphate from 1-deoxy-D-xylulose 5-phosphate: step 5/6. In terms of biological role, converts 2C-methyl-D-erythritol 2,4-cyclodiphosphate (ME-2,4cPP) into 1-hydroxy-2-methyl-2-(E)-butenyl 4-diphosphate. This is 4-hydroxy-3-methylbut-2-en-1-yl diphosphate synthase (ferredoxin) from Synechocystis sp. (strain ATCC 27184 / PCC 6803 / Kazusa).